A 706-amino-acid polypeptide reads, in one-letter code: Elongation factor G (706 aa).

The 283-residue stretch at 8–290 (KRYRNIGIVA…GVIEYMPSPT (283 aa)) folds into the tr-type G domain. Residues 17 to 24 (AHVDAGKT), 88 to 92 (DTPGH), and 142 to 145 (NKMD) contribute to the GTP site.

It belongs to the TRAFAC class translation factor GTPase superfamily. Classic translation factor GTPase family. EF-G/EF-2 subfamily.

It localises to the cytoplasm. Functionally, catalyzes the GTP-dependent ribosomal translocation step during translation elongation. During this step, the ribosome changes from the pre-translocational (PRE) to the post-translocational (POST) state as the newly formed A-site-bound peptidyl-tRNA and P-site-bound deacylated tRNA move to the P and E sites, respectively. Catalyzes the coordinated movement of the two tRNA molecules, the mRNA and conformational changes in the ribosome. This chain is Elongation factor G, found in Chromohalobacter salexigens (strain ATCC BAA-138 / DSM 3043 / CIP 106854 / NCIMB 13768 / 1H11).